The chain runs to 562 residues: Potassium-transporting ATPase potassium-binding subunit (562 aa).

12 consecutive transmembrane segments (helical) span residues 6–26 (FLLI…LGGF), 62–82 (YALA…VLLM), 132–152 (GLTV…FALI), 175–195 (LYVL…QGVL), 253–273 (FVQM…FGQV), 283–303 (LIWA…YAEL), 327–347 (FGIL…CGAV), 356–376 (ALGG…FGGV), 379–399 (GLYG…LMIG), 416–436 (MTAL…ALAL), 483–503 (LLLA…VLAI), and 526–546 (LFIG…FIPA).

Belongs to the KdpA family. In terms of assembly, the system is composed of three essential subunits: KdpA, KdpB and KdpC.

The protein localises to the cell inner membrane. Part of the high-affinity ATP-driven potassium transport (or Kdp) system, which catalyzes the hydrolysis of ATP coupled with the electrogenic transport of potassium into the cytoplasm. This subunit binds the periplasmic potassium ions and delivers the ions to the membrane domain of KdpB through an intramembrane tunnel. This is Potassium-transporting ATPase potassium-binding subunit from Yersinia pseudotuberculosis serotype I (strain IP32953).